Consider the following 257-residue polypeptide: MTKTLTKKISNKKHAAVVTYIMGGDGGLDNLEEQLLFLEKSGVSAIEIGIPFSDPVADGPIIQLAGLRALKKQVSLEAILNKLATSQVQIPLIIMSYINPIFHLGIPKFVEMVQKTPVKGLIIPDLPYEHQTLITPELEGTDIALIPLVSLTSPKERLKEIAKQAEGFIYAVTVNGTTGVRNKFDTHIDTHLAYLKSISPVPVLAGFGVSSIEHVEKFAHVCDGVIIGSKVVQMLHENKKAELGTFLQKAAEVRIEN.

Catalysis depends on proton acceptor residues glutamate 47 and aspartate 58.

The protein belongs to the TrpA family. Tetramer of two alpha and two beta chains.

It carries out the reaction (1S,2R)-1-C-(indol-3-yl)glycerol 3-phosphate + L-serine = D-glyceraldehyde 3-phosphate + L-tryptophan + H2O. The protein operates within amino-acid biosynthesis; L-tryptophan biosynthesis; L-tryptophan from chorismate: step 5/5. Its function is as follows. The alpha subunit is responsible for the aldol cleavage of indoleglycerol phosphate to indole and glyceraldehyde 3-phosphate. This Listeria welshimeri serovar 6b (strain ATCC 35897 / DSM 20650 / CCUG 15529 / CIP 8149 / NCTC 11857 / SLCC 5334 / V8) protein is Tryptophan synthase alpha chain.